Consider the following 472-residue polypeptide: Putative cytochrome P450 135B1 (472 aa).

Residue C388 coordinates heme. The tract at residues 442–472 is disordered; it reads RDVSATSQATAQGAGCPAARGGGPSRAVGSQ. Low complexity predominate over residues 452-472; the sequence is AQGAGCPAARGGGPSRAVGSQ.

This sequence belongs to the cytochrome P450 family. The cofactor is heme.

This chain is Putative cytochrome P450 135B1 (cyp135B1), found in Mycobacterium bovis (strain ATCC BAA-935 / AF2122/97).